A 525-amino-acid polypeptide reads, in one-letter code: Protein BSP1 (525 aa).

Disordered stretches follow at residues 21 to 40, 98 to 262, 285 to 325, and 339 to 525; these read INKP…TPIE, QQQH…PSKM, LSSE…VPPK, and DKTG…PTKI. A compositionally biased stretch (basic and acidic residues) spans 110 to 122; it reads IEPVRHIIPDRHS. The segment covering 148-162 has biased composition (polar residues); the sequence is NRASSENVVKSTTSA. Basic and acidic residues-rich tracts occupy residues 171 to 182, 201 to 223, and 230 to 242; these read YKDDITAKKLDV, DKNK…EDNK, and KDQD…KPTR. A compositionally biased stretch (polar residues) spans 251-261; sequence QLKSPPQSPSK. Low complexity predominate over residues 285 to 297; the sequence is LSSEENSRSSLSE. Basic and acidic residues-rich tracts occupy residues 314-325 and 339-354; these read KAEKKKPVVPPK and DKTG…EPEF. The span at 382 to 398 shows a compositional bias: polar residues; that stretch reads QNLSKNTENKKSVAQSK. Acidic residues predominate over residues 447 to 456; the sequence is EESEISDSEP. Residues 510-525 are compositionally biased toward basic residues; sequence NKSRSRGPKRKLPTKI.

It is found in the cell membrane. The protein resides in the cytoplasm. The protein localises to the cytoskeleton. It localises to the actin patch. Its function is as follows. Cortical patch protein involved in endocytosis. This is Protein BSP1 (BSP1) from Candida glabrata (strain ATCC 2001 / BCRC 20586 / JCM 3761 / NBRC 0622 / NRRL Y-65 / CBS 138) (Yeast).